A 377-amino-acid polypeptide reads, in one-letter code: Cytochrome b (377 aa).

4 helical membrane-spanning segments follow: residues 36–56, 80–102, 115–135, and 181–201; these read WGSL…FLAM, WLIR…LHMA, VWLI…MGYI, and FFVL…IHLI. Residues histidine 86 and histidine 100 each contribute to the heme b site. 2 residues coordinate heme b: histidine 185 and histidine 199. A ubiquinone is bound at residue histidine 204. Helical transmembrane passes span 227–247, 291–311, 326–346, and 354–374; these read YSSK…VIIF, LGGV…PFIS, LFWS…MPVV, and LTST…FLMI.

The protein belongs to the cytochrome b family. As to quaternary structure, the main subunits of complex b-c1 are: cytochrome b, cytochrome c1 and the Rieske protein. Heme b serves as cofactor.

The protein localises to the mitochondrion inner membrane. Its function is as follows. Component of the ubiquinol-cytochrome c reductase complex (complex III or cytochrome b-c1 complex) that is part of the mitochondrial respiratory chain. The b-c1 complex mediates electron transfer from ubiquinol to cytochrome c. Contributes to the generation of a proton gradient across the mitochondrial membrane that is then used for ATP synthesis. The protein is Cytochrome b (mt:Cyt-b) of Myzostoma seymourcollegiorum (Polychaete worm).